The sequence spans 463 residues: Glutamyl-tRNA reductase (463 aa).

Residues 49 to 52 (TCNR), Ser-109, 114 to 116 (EQQ), and Gln-120 each bind substrate. Cys-50 functions as the Nucleophile in the catalytic mechanism. An NADP(+)-binding site is contributed by 196–201 (GAGAMS).

Belongs to the glutamyl-tRNA reductase family. As to quaternary structure, homodimer.

The enzyme catalyses (S)-4-amino-5-oxopentanoate + tRNA(Glu) + NADP(+) = L-glutamyl-tRNA(Glu) + NADPH + H(+). Its pathway is porphyrin-containing compound metabolism; protoporphyrin-IX biosynthesis; 5-aminolevulinate from L-glutamyl-tRNA(Glu): step 1/2. Catalyzes the NADPH-dependent reduction of glutamyl-tRNA(Glu) to glutamate 1-semialdehyde (GSA). This is Glutamyl-tRNA reductase from Corynebacterium glutamicum (strain R).